The primary structure comprises 605 residues: Cystathionine gamma-synthase-like enzyme iboG1 (605 aa).

Y289 provides a ligand contact to substrate. Residue K393 is modified to N6-(pyridoxal phosphate)lysine.

Belongs to the trans-sulfuration enzymes family. Pyridoxal 5'-phosphate serves as cofactor.

Its pathway is secondary metabolite biosynthesis. Its function is as follows. Cystathionine gamma-synthase-like enzyme; part of the gene cluster that mediates the biosynthesis of the psychoactive metabolites ibotenic acid and muscimol. The first committed step is glutamate hydroxylation by the 2-oxoglutarate-dependent dioxygenase iboH, and the last step is decarboxylation of ibotenic acid to muscimol by the decarboxylase iboD. The order of the intermediate reactions is somewhat ambiguous. IboA likely activates the carboxylic acid at position 5 to introduce an amide bond, and the flavin monooxygenase iboF generates the N-O bond. There are several options for the latter step. One option is that iboF directly hydroxylates the amide nitrogen formed by iboA to produce a hydroxamic acid species. Another option is that iboF hydroxylates an external N-containing compound, whose resulting N-O bond is subsequently introduced into the hydroxyglutamate scaffold. The paralogous PLP-dependent cystathionine gamma-synthase-like enzymes iboG1 and iboG2 are likely involved in substitution of the OH group at position 3 by the O-N moiety. The first cyclic intermediate is most probably tricholomic acid which is likely desaturated to ibotenic acid by the cytochrome P450 monooxygenase iboC. This is Cystathionine gamma-synthase-like enzyme iboG1 (iboG1) from Amanita muscaria (strain Koide BX008).